Here is a 688-residue protein sequence, read N- to C-terminus: Lipase (688 aa).

The N-terminal stretch at 1–35 (MKTRQNKYSIRKFSVGASSILIAALLFMGGGSAQA) is a signal peptide. The segment at 31 to 309 (GSAQAAEQQQ…KSAKQKQYKN (279 aa)) is disordered. Residues 36 to 302 (AEQQQDKGTV…KNEDQTNKSA (267 aa)) constitute a propeptide, removed in mature form. Positions 45-54 (VENSTTQSIG) are enriched in polar residues. 2 stretches are compositionally biased toward basic and acidic residues: residues 84–95 (ESLHNETPKNED) and 103–143 (SQND…KHAS). Composition is skewed to polar residues over residues 144-175 (ENNQTLHSKAAQSNEDVKTKPSQLDNTTAQQE) and 184-211 (KQDTQSSKTTDLLRATGQNQSKDSQSTE). Over residues 227–268 (KNDDDKVETFNLNSKEEPLKVDKQANPTTDKDKSSKNDKGSH) the composition is skewed to basic and acidic residues. A compositionally biased stretch (polar residues) spans 274–289 (LESNAVATTNKQSKQQ). Ser-418 functions as the Nucleophile in the catalytic mechanism. Asp-609 functions as the Charge relay system in the catalytic mechanism. Asp-647 serves as a coordination point for Ca(2+). The active-site Charge relay system is His-648. Ca(2+) is bound by residues Asp-650, Asp-655, and Asp-658.

Belongs to the AB hydrolase superfamily. Lipase family.

It is found in the secreted. The enzyme catalyses a triacylglycerol + H2O = a diacylglycerol + a fatty acid + H(+). The protein is Lipase (lip) of Staphylococcus epidermidis (strain ATCC 35984 / DSM 28319 / BCRC 17069 / CCUG 31568 / BM 3577 / RP62A).